The primary structure comprises 118 residues: Large ribosomal subunit protein bL20 (118 aa).

This sequence belongs to the bacterial ribosomal protein bL20 family.

Its function is as follows. Binds directly to 23S ribosomal RNA and is necessary for the in vitro assembly process of the 50S ribosomal subunit. It is not involved in the protein synthesizing functions of that subunit. The polypeptide is Large ribosomal subunit protein bL20 (Shigella dysenteriae serotype 1 (strain Sd197)).